The sequence spans 117 residues: Immunoglobulin heavy variable 4-38-2 (117 aa).

An N-terminal signal peptide occupies residues 1-19 (MKHLWFFLLLVAAPRWVLS). The interval 20 to 44 (QVQLQESGPGLVKPSETLSLTCTVS) is framework-1. The Ig-like domain occupies 20–117 (QVQLQESGPG…ADTAVYYCAR (98 aa)). Cys-41 and Cys-115 are disulfide-bonded. Residues 45–53 (GYSISSGYY) form a complementarity-determining-1 region. The tract at residues 54-70 (WGWIRQPPGKGLEWIGS) is framework-2. The tract at residues 71–77 (IYHSGST) is complementarity-determining-2. The interval 78 to 115 (YYNPSLKSRVTISVDTSKNQFSLKLSSVTAADTAVYYC) is framework-3. Residues 116 to 117 (AR) form a complementarity-determining-3 region.

As to quaternary structure, immunoglobulins are composed of two identical heavy chains and two identical light chains; disulfide-linked.

It localises to the secreted. The protein localises to the cell membrane. V region of the variable domain of immunoglobulin heavy chains that participates in the antigen recognition. Immunoglobulins, also known as antibodies, are membrane-bound or secreted glycoproteins produced by B lymphocytes. In the recognition phase of humoral immunity, the membrane-bound immunoglobulins serve as receptors which, upon binding of a specific antigen, trigger the clonal expansion and differentiation of B lymphocytes into immunoglobulins-secreting plasma cells. Secreted immunoglobulins mediate the effector phase of humoral immunity, which results in the elimination of bound antigens. The antigen binding site is formed by the variable domain of one heavy chain, together with that of its associated light chain. Thus, each immunoglobulin has two antigen binding sites with remarkable affinity for a particular antigen. The variable domains are assembled by a process called V-(D)-J rearrangement and can then be subjected to somatic hypermutations which, after exposure to antigen and selection, allow affinity maturation for a particular antigen. The chain is Immunoglobulin heavy variable 4-38-2 from Homo sapiens (Human).